The following is a 397-amino-acid chain: MIERLKKVSLPALSAFILFCSCHYGRILGVICFDIGQRTSDDSLVVRNRHQFKWFCLSCRLISVTAVCCFCAPYVADIEDPYERLLQCFRLSASLICGICIIVVQVCYEKELLRMIISFLRLFRRVRRLSSLKRIGFGGKREFFLLLFKFICLVYELYSEICQLWHLPDSLSLFATLCEIFLEIGSLMIIHIGFVGYLSVAALYSEVNSFARIELRRQLRSLERPVGGPVGRKQLRIVEYRVDECISVYDEIERVGRTFHRLLELPVLIILLGKIFATTILSYEVIIRPELYARKIGMWGLVVKSFADVILLTLAVHEAVSSSRMMRRLSLENFPITDHKAWHMKWEMFLSRLNFFEFRVRPLGLFEVSNEVILLFLSSMITYFTYVVQYGIQTNRL.

At 1–12 the chain is on the cytoplasmic side; it reads MIERLKKVSLPA. The helical transmembrane segment at 13-33 threads the bilayer; that stretch reads LSAFILFCSCHYGRILGVICF. The Extracellular segment spans residues 34–87; sequence DIGQRTSDDSLVVRNRHQFKWFCLSCRLISVTAVCCFCAPYVADIEDPYERLLQ. A helical transmembrane segment spans residues 88-108; it reads CFRLSASLICGICIIVVQVCY. Topologically, residues 109 to 141 are cytoplasmic; sequence EKELLRMIISFLRLFRRVRRLSSLKRIGFGGKR. Residues 142 to 162 form a helical membrane-spanning segment; the sequence is EFFLLLFKFICLVYELYSEIC. At 163–179 the chain is on the extracellular side; that stretch reads QLWHLPDSLSLFATLCE. The chain crosses the membrane as a helical span at residues 180-200; it reads IFLEIGSLMIIHIGFVGYLSV. The Cytoplasmic segment spans residues 201 to 266; sequence AALYSEVNSF…RTFHRLLELP (66 aa). A helical transmembrane segment spans residues 267–287; that stretch reads VLIILLGKIFATTILSYEVII. Residues 288-295 are Extracellular-facing; sequence RPELYARK. A helical transmembrane segment spans residues 296-316; that stretch reads IGMWGLVVKSFADVILLTLAV. Topologically, residues 317–371 are cytoplasmic; sequence HEAVSSSRMMRRLSLENFPITDHKAWHMKWEMFLSRLNFFEFRVRPLGLFEVSNE. A helical transmembrane segment spans residues 372–392; that stretch reads VILLFLSSMITYFTYVVQYGI. The Extracellular portion of the chain corresponds to 393–397; the sequence is QTNRL.

It belongs to the insect chemoreceptor superfamily. Gustatory receptor (GR) family. Gr93a subfamily. As to expression, in larvae, is expressed in neurons of the posterior pharyngeal sense organ.

The protein resides in the cell membrane. Its function is as follows. Probable gustatory receptor which mediates acceptance or avoidance behavior, depending on its substrates. The polypeptide is Putative gustatory receptor 93c (Gr93c) (Drosophila melanogaster (Fruit fly)).